The primary structure comprises 492 residues: Probable malate:quinone oxidoreductase 1 (492 aa).

It belongs to the MQO family. Requires FAD as cofactor.

The catalysed reaction is (S)-malate + a quinone = a quinol + oxaloacetate. The protein operates within carbohydrate metabolism; tricarboxylic acid cycle; oxaloacetate from (S)-malate (quinone route): step 1/1. This is Probable malate:quinone oxidoreductase 1 from Staphylococcus aureus (strain MRSA252).